Here is a 429-residue protein sequence, read N- to C-terminus: Hemoglobinase (429 aa).

Positions 1-19 (MMLFSLFLISILHILLVKC) are cleaved as a signal peptide. A propeptide spanning residues 20-31 (QLDTNYEVSDET) is cleaved from the precursor. Residue H151 is part of the active site. Residues 288–309 (FQGSRDKSSSENDEPPMKPRHS) are disordered. The propeptide occupies 292–429 (RDKSSSENDE…INEAIIKICG (138 aa)).

This sequence belongs to the peptidase C13 family.

The catalysed reaction is Hydrolysis of proteins and small molecule substrates at -Asn-|-Xaa- bonds.. Its function is as follows. This protease is used by the parasite for degradation of the host globin. The polypeptide is Hemoglobinase (Schistosoma mansoni (Blood fluke)).